The sequence spans 251 residues: tRNA (guanine-N(7)-)-methyltransferase (251 aa).

Positions 80, 105, 132, and 155 each coordinate S-adenosyl-L-methionine. The active site involves Asp155. Residues Lys159, Asp191, and 228 to 231 (TKFE) contribute to the substrate site.

Belongs to the class I-like SAM-binding methyltransferase superfamily. TrmB family.

It catalyses the reaction guanosine(46) in tRNA + S-adenosyl-L-methionine = N(7)-methylguanosine(46) in tRNA + S-adenosyl-L-homocysteine. The protein operates within tRNA modification; N(7)-methylguanine-tRNA biosynthesis. Catalyzes the formation of N(7)-methylguanine at position 46 (m7G46) in tRNA. The polypeptide is tRNA (guanine-N(7)-)-methyltransferase (Histophilus somni (strain 2336) (Haemophilus somnus)).